Consider the following 605-residue polypeptide: Protein Spindly (605 aa).

The residue at position 1 (methionine 1) is an N-acetylmethionine. Residues 3 to 442 (TDIVINLRCK…ELKLKYEPEE (440 aa)) are a coiled coil. 3 positions are modified to phosphoserine: serine 513, serine 515, and serine 555. The segment at 545 to 581 (LSERSGNTLNSPRLAAESKLQTEVKEGKETASKLEKE) is disordered. Residues 564-581 (LQTEVKEGKETASKLEKE) are compositionally biased toward basic and acidic residues.

The protein belongs to the Spindly family. Interacts with KNTC1 and ZW10. These interactions appear weak and may be transient or indirect. Interacts with dynein intermediate chain and dynactin (DCTN1). Interacts with the catalytically active form of USP45. In terms of processing, monoubiquitinated with'Lys-48' linkage. Deubiquitinated by USP45.

It localises to the cytoplasm. It is found in the cytoskeleton. Its subcellular location is the microtubule organizing center. The protein localises to the centrosome. The protein resides in the chromosome. It localises to the centromere. It is found in the kinetochore. Its subcellular location is the nucleus. The protein localises to the spindle pole. Functionally, required for the localization of dynein and dynactin to the mitotic kintochore. Dynein is believed to control the initial lateral interaction between the kinetochore and spindle microtubules and to facilitate the subsequent formation of end-on kinetochore-microtubule attachments mediated by the NDC80 complex. Also required for correct spindle orientation. Does not appear to be required for the removal of spindle assembly checkpoint (SAC) proteins from the kinetochore upon bipolar spindle attachment. Acts as an adapter protein linking the dynein motor complex to various cargos and converts dynein from a non-processive to a highly processive motor in the presence of dynactin. Facilitates the interaction between dynein and dynactin and activates dynein processivity (the ability to move along a microtubule for a long distance without falling off the track). Plays a role in cell migration. This Macaca fascicularis (Crab-eating macaque) protein is Protein Spindly.